The chain runs to 380 residues: Cytochrome b (380 aa).

Helical transmembrane passes span 33–53 (FGSL…FLAM), 77–98 (WLIR…YLHI), 113–133 (WNVG…GYVL), and 178–198 (FFAF…IHLI). 2 residues coordinate heme b: His-83 and His-97. Heme b is bound by residues His-182 and His-196. His-201 lines the a ubiquinone pocket. The next 4 helical transmembrane spans lie at 226-246 (YKDL…ALFS), 288-308 (LGGV…PILH), 320-340 (FSQF…WIGG), and 347-367 (FVII…VMIP).

The protein belongs to the cytochrome b family. In terms of assembly, the cytochrome bc1 complex contains 3 respiratory subunits (MT-CYB, CYC1 and UQCRFS1), 2 core proteins (UQCRC1 and UQCRC2) and probably 6 low-molecular weight proteins. Heme b is required as a cofactor.

The protein resides in the mitochondrion inner membrane. Its function is as follows. Component of the ubiquinol-cytochrome c reductase complex (complex III or cytochrome b-c1 complex) that is part of the mitochondrial respiratory chain. The b-c1 complex mediates electron transfer from ubiquinol to cytochrome c. Contributes to the generation of a proton gradient across the mitochondrial membrane that is then used for ATP synthesis. In Paralichthys olivaceus (Bastard halibut), this protein is Cytochrome b (mt-cyb).